The following is a 108-amino-acid chain: Protein phosphatase 1 regulatory subunit 1C (108 aa).

The disordered stretch occupies residues Ala-25–His-108. Residues Asn-45–Val-54 show a composition bias toward basic and acidic residues. The segment covering Thr-55 to Tyr-73 has biased composition (polar residues). Over residues Ala-99–His-108 the composition is skewed to basic and acidic residues.

This sequence belongs to the protein phosphatase inhibitor 1 family.

It localises to the cytoplasm. In terms of biological role, may increase cell susceptibility to TNF-induced apoptosis. This is Protein phosphatase 1 regulatory subunit 1C (Ppp1r1c) from Mus musculus (Mouse).